A 118-amino-acid polypeptide reads, in one-letter code: NADH-ubiquinone oxidoreductase chain 3 (118 aa).

3 helical membrane-spanning segments follow: residues 6–26, 62–82, and 87–107; these read IFVY…VSFL, LVSI…PWAV, and IGLF…IGFV.

Belongs to the complex I subunit 3 family.

The protein localises to the mitochondrion membrane. The catalysed reaction is a ubiquinone + NADH + 5 H(+)(in) = a ubiquinol + NAD(+) + 4 H(+)(out). Functionally, core subunit of the mitochondrial membrane respiratory chain NADH dehydrogenase (Complex I) that is believed to belong to the minimal assembly required for catalysis. Complex I functions in the transfer of electrons from NADH to the respiratory chain. The immediate electron acceptor for the enzyme is believed to be ubiquinone. This Marchantia polymorpha (Common liverwort) protein is NADH-ubiquinone oxidoreductase chain 3 (ND3).